Consider the following 406-residue polypeptide: Olfactomedin-like protein 3 (406 aa).

The first 21 residues, 1–21 (MGPSAPLLLFFLLSWPGSLQG), serve as a signal peptide directing secretion. Positions 22–101 (QQHHLVEYME…REVDYLETQN (80 aa)) form a coiled coil. The 268-residue stretch at 134-401 (DCSYTISQVR…QIVYKLEMKK (268 aa)) folds into the Olfactomedin-like domain. Cysteines 135 and 328 form a disulfide. N-linked (GlcNAc...) asparagine glycosylation is present at Asn-248.

The protein belongs to the OLFML3 family.

It localises to the secreted. Its function is as follows. Secreted scaffold protein that plays an essential role in dorsoventral patterning during early development. Stabilizes axial formation by restricting chordin (CHRD) activity on the dorsal side. Acts by facilitating the association between the tolloid proteases and their substrate chordin (CHRD), leading to enhance chordin (CHRD) degradation. May have matrix-related function involved in placental and embryonic development, or play a similar role in other physiological processes. This chain is Olfactomedin-like protein 3 (Olfml3), found in Rattus norvegicus (Rat).